We begin with the raw amino-acid sequence, 3262 residues long: Striated muscle-specific serine/threonine-protein kinase (3262 aa).

The segment at 1–33 (MQKARGTRGEDAGTRAPPSPGVPPKRAKVGAGR) is disordered. R33 bears the Omega-N-methylarginine mark. Positions 45 to 126 (PVFLRPLKNA…GQASCEAVLT (82 aa)) constitute an Ig-like 1 domain. S141 bears the Phosphoserine mark. 4 disordered regions span residues 155–185 (RAFS…TSEE), 198–226 (EQEA…GPRH), 280–720 (GLHR…VSAG), and 814–875 (LAVR…APPT). The segment covering 158–185 (STPTGGSDTLVGTSLDTPPTSVTGTSEE) has biased composition (polar residues). Over residues 301–317 (PALPPPSKSALLPPPSP) the composition is skewed to pro residues. 2 positions are modified to phosphoserine: S368 and S375. The residue at position 379 (T379) is a Phosphothreonine. Residues S382 and S385 each carry the phosphoserine modification. The span at 404–422 (ILDKLQFFEERRRSLERSD) shows a compositional bias: basic and acidic residues. Position 423 is a phosphoserine (S423). A Phosphothreonine modification is found at T453. A phosphoserine mark is found at S457, S463, S493, S511, and S531. Basic and acidic residues predominate over residues 459-473 (EELRSPRGSVAERRR). The span at 510–522 (TSREELVRSHESL) shows a compositional bias: basic and acidic residues. Residues 543-552 (RPSTPKTSRA) show a composition bias toward polar residues. S554 is subject to Phosphoserine. Basic and acidic residues-rich tracts occupy residues 624–638 (PESR…KREP) and 663–680 (EKNR…RGPE). The region spanning 727-815 (PVFEIPLQNM…GQATCASSLA (89 aa)) is the Ig-like 2 domain. A compositionally biased stretch (polar residues) spans 820–830 (GSTSPFSSPIT). 3 Ig-like domains span residues 874 to 963 (PTFK…ARLE), 968 to 1062 (PESR…ARLT), and 1069 to 1157 (PLFT…AQLY). A disulfide bridge connects residues C994 and C1046. Phosphoserine occurs at positions 1133 and 1177. The interval 1162-1185 (RTAASGPSSKLEKMPSIPEEPEHG) is disordered. An Ig-like 6 domain is found at 1193–1283 (PDFLRPLQDL…AACYAHLYVT (91 aa)). Residues 1290 to 1387 (PDGAPEVVAV…PSEPVQLLEH (98 aa)) form the Fibronectin type-III 1 domain. 2 Ig-like domains span residues 1389-1485 (PPLE…VTLE) and 1490-1578 (PRFE…AELS). The cysteines at positions 1413 and 1469 are disulfide-linked. Positions 1606-1859 (YDIHQEIGRG…AEETLEHPWF (254 aa)) constitute a Protein kinase 1 domain. Residues 1612 to 1620 (IGRGAFSYL) and K1635 each bind ATP. D1724 (proton acceptor) is an active-site residue. Residues 1913-2571 (MPRRQPPSGG…SQPNLSSSVQ (659 aa)) form a disordered region. Over residues 1918 to 1927 (PPSGGLSSSS) the composition is skewed to low complexity. The span at 1980-1990 (EQERTPSKDQE) shows a compositional bias: basic and acidic residues. A phosphoserine mark is found at S1993, S2004, S2019, S2020, and S2042. Basic and acidic residues predominate over residues 2009-2019 (SPRRPELRRGS). Asymmetric dimethylarginine; alternate is present on R2060. The residue at position 2060 (R2060) is an Omega-N-methylarginine; alternate. The segment covering 2069–2081 (AQRLQALRQRLLR) has biased composition (low complexity). Residues S2114 and S2135 each carry the phosphoserine modification. The residue at position 2144 (R2144) is an Omega-N-methylarginine. Polar residues predominate over residues 2168–2179 (ESPSLSALSETQ). Residues S2182 and S2207 each carry the phosphoserine modification. Positions 2193-2207 (ITKSPEPSAVTSRDS) are enriched in polar residues. Pro residues predominate over residues 2208-2218 (PQPPEPQPVPE). The span at 2219 to 2229 (KVPEPKPEPVR) shows a compositional bias: basic and acidic residues. Positions 2230–2268 (AAKPAQPPLALQMPTQPLTPYAQIMQSLQLSSPTLSPQD) are enriched in low complexity. The span at 2337–2348 (FEAKFKRSRESP) shows a compositional bias: basic and acidic residues. The segment covering 2349-2358 (LSRGLRLLSR) has biased composition (low complexity). Over residues 2359 to 2375 (SRSEERGPFRGAEDDGI) the composition is skewed to basic and acidic residues. At S2379 the chain carries Phosphoserine. Phosphothreonine is present on T2383. Residues 2387-2398 (LVRRPERSRSVQ) show a composition bias toward basic and acidic residues. S2413, S2417, S2441, S2442, S2447, and S2451 each carry phosphoserine. Over residues 2461–2487 (SSTLERLSSRLQRSGSSEDSGGASGRS) the composition is skewed to low complexity. Over residues 2513 to 2523 (QLGSQTGATTP) the composition is skewed to polar residues. Residues S2524 and S2527 each carry the phosphoserine modification. Residues 2524 to 2543 (SAESLGSEASGTSGSSAPGE) show a composition bias toward low complexity. Residues 2546-2557 (SRHRWGLSRLRK) are compositionally biased toward basic residues. At S2562 the chain carries Phosphoserine. The segment covering 2562–2571 (SQPNLSSSVQ) has biased composition (polar residues). The Ig-like 9 domain occupies 2586–2676 (PPVFHIKLKD…GSITSSCTVA (91 aa)). A disulfide bond links C2608 and C2660. The Fibronectin type-III 2 domain maps to 2683–2777 (KLAPPEVPQT…KVFIRGTPDS (95 aa)). Disordered stretches follow at residues 2756 to 2832 (RAGQ…MSAN), 2857 to 2899 (ATQQ…PAPS), and 2912 to 2960 (APPA…PQKP). T2774 is subject to Phosphothreonine. 2 stretches are compositionally biased toward low complexity: residues 2775 to 2789 (PDSP…RDAP) and 2803 to 2831 (PTSL…SMSA). Position 2777 is a phosphoserine (S2777). The Fibronectin type-III 3 domain maps to 2865–2968 (PPSIVVTPSE…KPYTFLEEKA (104 aa)). Residues 2883-2899 (GTLTPTSSPQGVKPAPS) are compositionally biased toward polar residues. Pro residues predominate over residues 2913-2927 (PPAPQAPAPEPPPEP). The segment covering 2943–2953 (SSPTPESTTLR) has biased composition (polar residues). The residue at position 2944 (S2944) is a Phosphoserine. One can recognise a Protein kinase 2 domain in the interval 2946–3213 (TPESTTLRQG…LQDCLAHPWL (268 aa)). D3080 (proton acceptor) is an active-site residue.

It belongs to the protein kinase superfamily. CAMK Ser/Thr protein kinase family. In terms of assembly, interacts with MTM1. Isoform 3 is found as a monomer or homodimer. May be autophosphorylated. As to expression, isoform 1 is preferentially expressed in striated muscle. Non-kinase form such as isoform 3 is predominantly expressed in the aorta. Isoform 3 appears to be expressed only in highly differentiated ASMC in normal vessel walls and down-regulated in dedifferentiated ASMC in vivo. In response to vascular injuries ASMC dedifferentiate and change from a quiescent and contractile phenotype to a proliferative and synthetic phenotype. This proliferation of vascular smooth muscle cells is one of the most prominent features of atherosclerosis. Isoform 1 and isoform 4 are expressed in cardiomyocytes of the developing heart.

The protein localises to the nucleus. It carries out the reaction L-seryl-[protein] + ATP = O-phospho-L-seryl-[protein] + ADP + H(+). The catalysed reaction is L-threonyl-[protein] + ATP = O-phospho-L-threonyl-[protein] + ADP + H(+). Isoform 3 may have a role in regulating the growth and differentiation of arterial smooth muscle cells. This chain is Striated muscle-specific serine/threonine-protein kinase (Speg), found in Mus musculus (Mouse).